Consider the following 319-residue polypeptide: Mercury resistance probable Hg transport protein (319 aa).

Cys298, Cys299, Cys318, and Cys319 together coordinate Hg(2+).

The sequence is that of Mercury resistance probable Hg transport protein from Streptomyces lividans.